Here is a 270-residue protein sequence, read N- to C-terminus: Formamidopyrimidine-DNA glycosylase (270 aa).

P2 (schiff-base intermediate with DNA) is an active-site residue. E3 serves as the catalytic Proton donor. K57 serves as the catalytic Proton donor; for beta-elimination activity. The DNA site is built by H90, R109, and K151. An FPG-type zinc finger spans residues R236–K270. R260 serves as the catalytic Proton donor; for delta-elimination activity.

It belongs to the FPG family. As to quaternary structure, monomer. Requires Zn(2+) as cofactor.

The catalysed reaction is Hydrolysis of DNA containing ring-opened 7-methylguanine residues, releasing 2,6-diamino-4-hydroxy-5-(N-methyl)formamidopyrimidine.. It catalyses the reaction 2'-deoxyribonucleotide-(2'-deoxyribose 5'-phosphate)-2'-deoxyribonucleotide-DNA = a 3'-end 2'-deoxyribonucleotide-(2,3-dehydro-2,3-deoxyribose 5'-phosphate)-DNA + a 5'-end 5'-phospho-2'-deoxyribonucleoside-DNA + H(+). Functionally, involved in base excision repair of DNA damaged by oxidation or by mutagenic agents. Acts as a DNA glycosylase that recognizes and removes damaged bases. Has a preference for oxidized purines, such as 7,8-dihydro-8-oxoguanine (8-oxoG). Has AP (apurinic/apyrimidinic) lyase activity and introduces nicks in the DNA strand. Cleaves the DNA backbone by beta-delta elimination to generate a single-strand break at the site of the removed base with both 3'- and 5'-phosphates. In Pseudoalteromonas atlantica (strain T6c / ATCC BAA-1087), this protein is Formamidopyrimidine-DNA glycosylase.